The chain runs to 554 residues: uncharacterized protein (554 aa).

A disordered region spans residues 1-25 (MSSSIPPRLYDMSPTESKKQEDVSE). Ser-13 is subject to Phosphoserine. The next 6 helical transmembrane spans lie at 82–102 (FFVA…TSLI), 120–140 (APYL…VWSL), 149–169 (WAFN…GASP), 171–191 (FASI…NLPV), 210–230 (VMSF…WGLI), and 253–273 (FLFT…LVSV). Ser-334 carries the phosphoserine modification. Transmembrane regions (helical) follow at residues 364–384 (LAIS…AFPL), 412–432 (SLIV…LVEF), 437–457 (KGTL…STTA), 462–482 (AYLG…GVLY), 497–517 (AVGL…VIAM), and 525–545 (APIF…VFFP).

Belongs to the major facilitator superfamily.

Its subcellular location is the endoplasmic reticulum. The protein localises to the membrane. This is an uncharacterized protein from Schizosaccharomyces pombe (strain 972 / ATCC 24843) (Fission yeast).